An 81-amino-acid polypeptide reads, in one-letter code: Acyl carrier protein (81 aa).

A Carrier domain is found at 4-79 (QEIFEKVQTI…QAVDFISQKV (76 aa)). S39 is modified (O-(pantetheine 4'-phosphoryl)serine).

This sequence belongs to the acyl carrier protein (ACP) family. Post-translationally, 4'-phosphopantetheine is transferred from CoA to a specific serine of apo-ACP by AcpS. This modification is essential for activity because fatty acids are bound in thioester linkage to the sulfhydryl of the prosthetic group.

The protein localises to the plastid. It is found in the chloroplast. Its pathway is lipid metabolism; fatty acid biosynthesis. Carrier of the growing fatty acid chain in fatty acid biosynthesis. This is Acyl carrier protein from Guillardia theta (Cryptophyte).